The primary structure comprises 126 residues: Large ribosomal subunit protein bL19 (126 aa).

The protein belongs to the bacterial ribosomal protein bL19 family.

This protein is located at the 30S-50S ribosomal subunit interface and may play a role in the structure and function of the aminoacyl-tRNA binding site. In Paracoccus denitrificans (strain Pd 1222), this protein is Large ribosomal subunit protein bL19.